Here is a 291-residue protein sequence, read N- to C-terminus: MTAITASMVKELRDRTGLAMMECKKALTEANGDIELAIDNLRKSGQAKAAKKAGNIAADGAITIVQDGNKAVLVEVNCQTDFVAKDENFSNFSNAVAKAILASGETDAEKVAELKLEDGQSVEEARIALVQKIGENIQVRRAKIVEGENLAVYKHGLRIGVVVSYTGSAETGKGIAMHVAAFNPVAVSAEAVPADLVAKEKEIAEAKAIESGKPANIVEKMVSGSVEKYLNEVALDRQMYVIDNDKKVADVLKATATNIVEFVRFEVGEGIEKKAEMSFAEEVAAAQAAAK.

Positions 80–83 (TDFV) are involved in Mg(2+) ion dislocation from EF-Tu.

This sequence belongs to the EF-Ts family.

It localises to the cytoplasm. Its function is as follows. Associates with the EF-Tu.GDP complex and induces the exchange of GDP to GTP. It remains bound to the aminoacyl-tRNA.EF-Tu.GTP complex up to the GTP hydrolysis stage on the ribosome. The polypeptide is Elongation factor Ts (Acinetobacter baylyi (strain ATCC 33305 / BD413 / ADP1)).